The primary structure comprises 418 residues: UDP-N-acetylglucosamine 1-carboxyvinyltransferase (418 aa).

Residue 23–24 participates in phosphoenolpyruvate binding; it reads KN. UDP-N-acetyl-alpha-D-glucosamine is bound at residue R92. The Proton donor role is filled by C116. Position 116 is a 2-(S-cysteinyl)pyruvic acid O-phosphothioketal (C116). Residues 121 to 125, 161 to 164, D306, and I328 each bind UDP-N-acetyl-alpha-D-glucosamine; these read RPVDL and KVSV.

Belongs to the EPSP synthase family. MurA subfamily.

The protein resides in the cytoplasm. The catalysed reaction is phosphoenolpyruvate + UDP-N-acetyl-alpha-D-glucosamine = UDP-N-acetyl-3-O-(1-carboxyvinyl)-alpha-D-glucosamine + phosphate. The protein operates within cell wall biogenesis; peptidoglycan biosynthesis. In terms of biological role, cell wall formation. Adds enolpyruvyl to UDP-N-acetylglucosamine. The sequence is that of UDP-N-acetylglucosamine 1-carboxyvinyltransferase from Vibrio parahaemolyticus serotype O3:K6 (strain RIMD 2210633).